A 299-amino-acid chain; its full sequence is Protease HtpX homolog (299 aa).

2 consecutive transmembrane segments (helical) span residues Ile-15–Phe-35 and Gly-39–Phe-59. A Zn(2+)-binding site is contributed by His-143. Glu-144 is a catalytic residue. His-147 serves as a coordination point for Zn(2+). The next 2 helical transmembrane spans lie at Ile-158–Trp-178 and Ile-198–Val-218. Glu-227 is a Zn(2+) binding site.

The protein belongs to the peptidase M48B family. Zn(2+) is required as a cofactor.

Its subcellular location is the cell membrane. In Streptococcus pneumoniae serotype 4 (strain ATCC BAA-334 / TIGR4), this protein is Protease HtpX homolog.